A 365-amino-acid polypeptide reads, in one-letter code: Histidinol-phosphate aminotransferase (365 aa).

Position 220 is an N6-(pyridoxal phosphate)lysine (lysine 220).

Belongs to the class-II pyridoxal-phosphate-dependent aminotransferase family. Histidinol-phosphate aminotransferase subfamily. As to quaternary structure, homodimer. Requires pyridoxal 5'-phosphate as cofactor.

The enzyme catalyses L-histidinol phosphate + 2-oxoglutarate = 3-(imidazol-4-yl)-2-oxopropyl phosphate + L-glutamate. It functions in the pathway amino-acid biosynthesis; L-histidine biosynthesis; L-histidine from 5-phospho-alpha-D-ribose 1-diphosphate: step 7/9. This chain is Histidinol-phosphate aminotransferase, found in Neisseria meningitidis serogroup B (strain ATCC BAA-335 / MC58).